The primary structure comprises 480 residues: Aspartyl/glutamyl-tRNA(Asn/Gln) amidotransferase subunit B (480 aa).

Belongs to the GatB/GatE family. GatB subfamily. In terms of assembly, heterotrimer of A, B and C subunits.

It catalyses the reaction L-glutamyl-tRNA(Gln) + L-glutamine + ATP + H2O = L-glutaminyl-tRNA(Gln) + L-glutamate + ADP + phosphate + H(+). The catalysed reaction is L-aspartyl-tRNA(Asn) + L-glutamine + ATP + H2O = L-asparaginyl-tRNA(Asn) + L-glutamate + ADP + phosphate + 2 H(+). Functionally, allows the formation of correctly charged Asn-tRNA(Asn) or Gln-tRNA(Gln) through the transamidation of misacylated Asp-tRNA(Asn) or Glu-tRNA(Gln) in organisms which lack either or both of asparaginyl-tRNA or glutaminyl-tRNA synthetases. The reaction takes place in the presence of glutamine and ATP through an activated phospho-Asp-tRNA(Asn) or phospho-Glu-tRNA(Gln). This Saccharophagus degradans (strain 2-40 / ATCC 43961 / DSM 17024) protein is Aspartyl/glutamyl-tRNA(Asn/Gln) amidotransferase subunit B.